We begin with the raw amino-acid sequence, 251 residues long: Protein FAM216A (251 aa).

Polar residues predominate over residues 1-16 (MPNQGPVSDWTECSSS). The segment at 1-49 (MPNQGPVSDWTECSSSAEPPAVARAEGGGGGSAGHSYYQNSKDRIKDGH) is disordered.

It belongs to the FAM216 family.

The protein is Protein FAM216A (FAM216A) of Bos taurus (Bovine).